The chain runs to 136 residues: Putative pre-16S rRNA nuclease (136 aa).

It belongs to the YqgF nuclease family.

It localises to the cytoplasm. Could be a nuclease involved in processing of the 5'-end of pre-16S rRNA. The polypeptide is Putative pre-16S rRNA nuclease (Francisella tularensis subsp. tularensis (strain WY96-3418)).